Consider the following 297-residue polypeptide: Bifunctional protein FolD (297 aa).

NADP(+)-binding positions include 164 to 166 (GRS), serine 193, and valine 234.

The protein belongs to the tetrahydrofolate dehydrogenase/cyclohydrolase family. In terms of assembly, homodimer.

The enzyme catalyses (6R)-5,10-methylene-5,6,7,8-tetrahydrofolate + NADP(+) = (6R)-5,10-methenyltetrahydrofolate + NADPH. It catalyses the reaction (6R)-5,10-methenyltetrahydrofolate + H2O = (6R)-10-formyltetrahydrofolate + H(+). The protein operates within one-carbon metabolism; tetrahydrofolate interconversion. Catalyzes the oxidation of 5,10-methylenetetrahydrofolate to 5,10-methenyltetrahydrofolate and then the hydrolysis of 5,10-methenyltetrahydrofolate to 10-formyltetrahydrofolate. The sequence is that of Bifunctional protein FolD from Natronomonas pharaonis (strain ATCC 35678 / DSM 2160 / CIP 103997 / JCM 8858 / NBRC 14720 / NCIMB 2260 / Gabara) (Halobacterium pharaonis).